We begin with the raw amino-acid sequence, 72 residues long: Protein LITTLE ZIPPER 4 (72 aa).

The stretch at 14-44 forms a coiled coil; sequence YIIKENERLRKKAQILNQENQQLLFELKQKL. A disordered region spans residues 42–72; that stretch reads QKLSKTKNSSGSNQGNNNNNNNLSSSSSASG. Over residues 49–72 the composition is skewed to low complexity; the sequence is NSSGSNQGNNNNNNNLSSSSSASG.

As to quaternary structure, interacts with REV.

Its function is as follows. Competitive inhibitor of the HD-ZIPIII transcription factors in shoot apical meristem (SAM) development. Acts by forming non-functional heterodimers. Part of a negative feedback loop. Essential for proper functioning of stem cells in the SAM. The polypeptide is Protein LITTLE ZIPPER 4 (Arabidopsis thaliana (Mouse-ear cress)).